The following is a 236-amino-acid chain: Putative lipoprotein MlpA (236 aa).

Positions 1–21 are cleaved as a signal peptide; it reads MTKNIVNTALVLVGAGSLLTG. Cysteine 22 is lipidated: N-palmitoyl cysteine. Residue cysteine 22 is the site of S-diacylglycerol cysteine attachment.

It localises to the cell membrane. The protein is Putative lipoprotein MlpA (mlpA) of Myxococcus xanthus.